The primary structure comprises 135 residues: 6-pyruvoyl tetrahydrobiopterin synthase (135 aa).

Histidine 17 contacts Zn(2+). Cysteine 36 (proton acceptor) is an active-site residue. Zn(2+)-binding residues include histidine 40 and histidine 42. Active-site charge relay system residues include histidine 81 and glutamate 124.

This sequence belongs to the PTPS family. Homohexamer formed of two homotrimers in a head to head fashion. Zn(2+) serves as cofactor.

The enzyme catalyses 7,8-dihydroneopterin 3'-triphosphate = 6-pyruvoyl-5,6,7,8-tetrahydropterin + triphosphate + H(+). The protein operates within cofactor biosynthesis; tetrahydrobiopterin biosynthesis; tetrahydrobiopterin from 7,8-dihydroneopterin triphosphate: step 1/3. Functionally, involved in the biosynthesis of tetrahydrobiopterin, an essential cofactor of aromatic amino acid hydroxylases. Catalyzes the transformation of 7,8-dihydroneopterin triphosphate into 6-pyruvoyl tetrahydropterin. In Dictyostelium discoideum (Social amoeba), this protein is 6-pyruvoyl tetrahydrobiopterin synthase (ptsA).